A 290-amino-acid polypeptide reads, in one-letter code: Chitinase 10 (290 aa).

An N-terminal signal peptide occupies residues 1–28 (MAKPTPAPRATPFLLAAVLSIVVVAASG). Cystine bridges form between cysteine 70–cysteine 132 and cysteine 144–cysteine 153. Glutamate 114 (proton donor) is an active-site residue. Residues asparagine 193 and asparagine 234 are each glycosylated (N-linked (GlcNAc...) asparagine). A disulfide bridge connects residues cysteine 252 and cysteine 284.

This sequence belongs to the glycosyl hydrolase 19 family. Chitinase class I subfamily. As to expression, expressed at low levels in roots, leaves and meristems.

It catalyses the reaction Random endo-hydrolysis of N-acetyl-beta-D-glucosaminide (1-&gt;4)-beta-linkages in chitin and chitodextrins.. This chain is Chitinase 10 (Cht10), found in Oryza sativa subsp. japonica (Rice).